Consider the following 1132-residue polypeptide: Rho GTPase-activating protein gacE (1132 aa).

Positions 76–262 (LEMNKILKSE…FLISNYLNVF (187 aa)) constitute a Rho-GAP domain. Disordered regions lie at residues 279–354 (NELL…SSPI) and 472–517 (NSTT…SLIN). A compositionally biased stretch (low complexity) spans 281–301 (LLNNNNNNNNVIMPTTTTTTT). Residues 302–311 (SASSSILPTD) are compositionally biased toward polar residues. Low complexity-rich tracts occupy residues 328-354 (SIPLSSIGSSSTSPIISPSSSSSSSPI), 473-498 (STTTTTTSTSTSTSTSTSTSTSSTTT), and 507-517 (SNSASNNSLIN).

The protein localises to the cytoplasm. Its function is as follows. Rho GTPase-activating protein involved in the signal transduction pathway. This chain is Rho GTPase-activating protein gacE (gacE), found in Dictyostelium discoideum (Social amoeba).